Here is a 289-residue protein sequence, read N- to C-terminus: (+)-kolavelool synthase (289 aa).

It belongs to the diterpene synthase family.

It carries out the reaction (+)-kolavenyl diphosphate + H2O = (+)-kolavelool + diphosphate. In terms of biological role, involved in the biosynthesis of (+)-O-methylkolavelool. Catalyzes the biosynthesis of (+)-kolavelool from (+)-kolavenyl diphosphate via the release of the diphosphate moiety through the nucleophilic addition of a water molecule. This Herpetosiphon aurantiacus (strain ATCC 23779 / DSM 785 / 114-95) protein is (+)-kolavelool synthase.